A 345-amino-acid chain; its full sequence is Dihydroorotase (345 aa).

The Zn(2+) site is built by His13 and His15. Substrate is bound by residues 15 to 17 (HLR) and Asn41. 3 residues coordinate Zn(2+): Lys99, His136, and His174. N6-carboxylysine is present on Lys99. A substrate-binding site is contributed by His136. Position 219 (Leu219) interacts with substrate. Asp247 contacts Zn(2+). Asp247 is an active-site residue. Substrate is bound by residues His251 and Ala263.

This sequence belongs to the metallo-dependent hydrolases superfamily. DHOase family. Class II DHOase subfamily. As to quaternary structure, homodimer. Requires Zn(2+) as cofactor.

It catalyses the reaction (S)-dihydroorotate + H2O = N-carbamoyl-L-aspartate + H(+). It participates in pyrimidine metabolism; UMP biosynthesis via de novo pathway; (S)-dihydroorotate from bicarbonate: step 3/3. Catalyzes the reversible cyclization of carbamoyl aspartate to dihydroorotate. The sequence is that of Dihydroorotase from Hahella chejuensis (strain KCTC 2396).